A 223-amino-acid chain; its full sequence is Ribonuclease T (223 aa).

The region spanning 20–194 (VVIDVETAGF…YDTERTAELF (175 aa)) is the Exonuclease domain. 4 residues coordinate Mg(2+): D23, E25, H181, and D186. Catalysis depends on H181, which acts as the Proton donor/acceptor.

This sequence belongs to the RNase T family. In terms of assembly, homodimer. Mg(2+) is required as a cofactor.

Trims short 3' overhangs of a variety of RNA species, leaving a one or two nucleotide 3' overhang. Responsible for the end-turnover of tRNA: specifically removes the terminal AMP residue from uncharged tRNA (tRNA-C-C-A). Also appears to be involved in tRNA biosynthesis. The sequence is that of Ribonuclease T from Shewanella baltica (strain OS155 / ATCC BAA-1091).